The primary structure comprises 347 residues: Bombesin receptor-activated protein C6orf89 (347 aa).

The Cytoplasmic portion of the chain corresponds to 1 to 58 (MDLAANEISIYDKLSETVDLVRQTGHQCGMSEKAIEKFIRQLLEKNEPQRPPPQYPLL). A helical transmembrane segment spans residues 59–79 (IVVYKVLATLGLILLTAYFVI). Residues 80 to 347 (QPFSPLAPEP…ICDGTAFSEL (268 aa)) are Extracellular-facing.

As to quaternary structure, homodimer. Interacts with BRS3. Interacts (via N-terminus) with SIN3B. In terms of processing, glycosylated.

Its subcellular location is the golgi apparatus membrane. It localises to the midbody. The protein localises to the cytoplasm. The protein resides in the nucleus. It is found in the nucleolus. In terms of biological role, exhibits histone deacetylase (HDAC) enhancer properties. May play a role in cell cycle progression and wound repair of bronchial epithelial cells. The protein is Bombesin receptor-activated protein C6orf89 (C6orf89) of Homo sapiens (Human).